Consider the following 427-residue polypeptide: 11-beta-hydroxysteroid dehydrogenase type 2 (427 aa).

An NAD(+)-binding site is contributed by 82–111; it reads TRAVLITGCDSGFGNATAKKLDAMGFTVLA. Position 219 (S219) interacts with substrate. Y232 functions as the Proton acceptor in the catalytic mechanism.

It belongs to the short-chain dehydrogenases/reductases (SDR) family. As to quaternary structure, interacts with ligand-free cytoplasmic NR3C2. In terms of tissue distribution, highly expressed in the kidney and adrenal and at lower levels in the colon.

It localises to the microsome. Its subcellular location is the endoplasmic reticulum. The enzyme catalyses an 11beta-hydroxysteroid + NAD(+) = an 11-oxosteroid + NADH + H(+). It carries out the reaction corticosterone + NAD(+) = 11-dehydrocorticosterone + NADH + H(+). It catalyses the reaction cortisol + NAD(+) = cortisone + NADH + H(+). The catalysed reaction is 11beta,17beta-dihydroxyandrost-4-ene-3-one + NAD(+) = 17beta-hydroxyandrost-4-ene-3,11-dione + NADH + H(+). The enzyme catalyses 11beta-hydroxyandrost-4-ene-3,17-dione + NAD(+) = androst-4-ene-3,11,17-trione + NADH + H(+). Its pathway is steroid metabolism. Inhibited by glycyrrhetinic acid, carbenoloxone, 11-alpha-OH-progesterone and 11-beta-OH-progesterone. Its function is as follows. Catalyzes the conversion of biologically active 11beta-hydroxyglucocorticoids (11beta-hydroxysteroid) such as cortisol, to inactive 11-ketoglucocorticoids (11-oxosteroid) such as cortisone, in the presence of NAD(+). Functions as a dehydrogenase (oxidase), thereby decreasing the concentration of active glucocorticoids, thus protecting the nonselective mineralocorticoid receptor from occupation by glucocorticoids. Plays an important role in maintaining glucocorticoids balance during preimplantation and protects the fetus from excessive maternal corticosterone exposure. Catalyzes the oxidation of 11beta-hydroxytestosterone (11beta,17beta-dihydroxyandrost-4-ene-3-one) to 11-ketotestosterone (17beta-hydroxyandrost-4-ene-3,11-dione), a major bioactive androgen. Catalyzes the conversion of 11beta-hydroxyandrostenedione (11beta-hydroxyandrost-4-ene-3,17-dione) to 11-ketoandrostenedione (androst-4-ene-3,11,17-trione), which can be further metabolized to 11-ketotestosterone. Converts 7-beta-25-dihydroxycholesterol to 7-oxo-25-hydroxycholesterol in vitro. 7-beta-25-dihydroxycholesterol (not 7-oxo-25-hydroxycholesterol) acts as a ligand for the G-protein-coupled receptor (GPCR) Epstein-Barr virus-induced gene 2 (EBI2) and may thereby regulate immune cell migration. May protect ovulating oocytes and fertilizing spermatozoa from the adverse effects of cortisol. This is 11-beta-hydroxysteroid dehydrogenase type 2 (HSD11B2) from Ovis aries (Sheep).